The sequence spans 249 residues: Triosephosphate isomerase (249 aa).

Substrate-binding residues include asparagine 10 and lysine 12. Residue histidine 94 is the Electrophile of the active site. Glutamate 166 serves as the catalytic Proton acceptor.

This sequence belongs to the triosephosphate isomerase family. As to quaternary structure, homodimer. Post-translationally, the N-terminus is blocked.

The enzyme catalyses D-glyceraldehyde 3-phosphate = dihydroxyacetone phosphate. The protein operates within carbohydrate biosynthesis; gluconeogenesis. It functions in the pathway carbohydrate degradation; glycolysis; D-glyceraldehyde 3-phosphate from glycerone phosphate: step 1/1. This is Triosephosphate isomerase (TPI1) from Paracoccidioides lutzii (strain ATCC MYA-826 / Pb01) (Paracoccidioides brasiliensis).